Reading from the N-terminus, the 226-residue chain is Isoprenyl transferase (226 aa).

Residue aspartate 12 is part of the active site. A Mg(2+)-binding site is contributed by aspartate 12. Substrate-binding positions include 13–16 (GNAR), tryptophan 17, lysine 25, histidine 29, and 57–59 (SFE). Asparagine 60 acts as the Proton acceptor in catalysis. Substrate-binding positions include tryptophan 61, arginine 63, arginine 174, and 180 to 182 (RIS). Glutamate 193 provides a ligand contact to Mg(2+).

Belongs to the UPP synthase family. Homodimer. Requires Mg(2+) as cofactor.

Functionally, catalyzes the condensation of isopentenyl diphosphate (IPP) with allylic pyrophosphates generating different type of terpenoids. The protein is Isoprenyl transferase of Rickettsia prowazekii (strain Madrid E).